Consider the following 118-residue polypeptide: Disulfide bond formation protein (118 aa).

Residues 1–27 form the signal peptide; the sequence is MRAKWLWMTAVGSLLITVLTAWGWAAA. The Thioredoxin domain occupies 28 to 114; that stretch reads SSQDSKIVYV…VAEAVLRSFF (87 aa). An intrachain disulfide couples C42 to C45.

It belongs to the thioredoxin family.

The protein resides in the secreted. Functionally, stimulates the oxidation and reduction of disulfide bonds in vitro. The sequence is that of Disulfide bond formation protein (bdb) from Brevibacillus choshinensis.